The sequence spans 240 residues: MKYYRNQDSYWWADADDPFLWRESLPFVRVGLAELIIMTLVSLVLAVIAGWFWWPLAVPFVLVAALVAWFFRNPRRKVPETIGTVVSPADGKLVEIVEVDDPIIGAAVRFGIFLSVFNVHANRIAMPGRVVRVRYRPGKFLNALRSESTKENENIDVELECPEIGGRIVRIRQITGQFARRIVCWARVGDVLQRGEMFGMIKLGSRTELVIPRDEALEIVAQVGEKVCAGSTVFARYQQG.

Residue serine 205 is the Schiff-base intermediate with substrate; via pyruvic acid of the active site. Position 205 is a pyruvic acid (Ser); by autocatalysis (serine 205).

This sequence belongs to the phosphatidylserine decarboxylase family. PSD-A subfamily. In terms of assembly, heterodimer of a large membrane-associated beta subunit and a small pyruvoyl-containing alpha subunit. Requires pyruvate as cofactor. Post-translationally, is synthesized initially as an inactive proenzyme. Formation of the active enzyme involves a self-maturation process in which the active site pyruvoyl group is generated from an internal serine residue via an autocatalytic post-translational modification. Two non-identical subunits are generated from the proenzyme in this reaction, and the pyruvate is formed at the N-terminus of the alpha chain, which is derived from the carboxyl end of the proenzyme. The post-translation cleavage follows an unusual pathway, termed non-hydrolytic serinolysis, in which the side chain hydroxyl group of the serine supplies its oxygen atom to form the C-terminus of the beta chain, while the remainder of the serine residue undergoes an oxidative deamination to produce ammonia and the pyruvoyl prosthetic group on the alpha chain.

It localises to the cell membrane. The catalysed reaction is a 1,2-diacyl-sn-glycero-3-phospho-L-serine + H(+) = a 1,2-diacyl-sn-glycero-3-phosphoethanolamine + CO2. It functions in the pathway phospholipid metabolism; phosphatidylethanolamine biosynthesis; phosphatidylethanolamine from CDP-diacylglycerol: step 2/2. Its function is as follows. Catalyzes the formation of phosphatidylethanolamine (PtdEtn) from phosphatidylserine (PtdSer). The sequence is that of Phosphatidylserine decarboxylase proenzyme from Rhodopirellula baltica (strain DSM 10527 / NCIMB 13988 / SH1).